Consider the following 634-residue polypeptide: Nucleoside triphosphatase I (634 aa).

Residues 41–203 form the Helicase ATP-binding domain; that stretch reads FLGLDSMNSL…ALLVNLLRPG (163 aa). Residue 54 to 61 coordinates ATP; it reads QETGVGKT. The DEXH box signature appears at 140 to 143; it reads DECH. The region spanning 355 to 531 is the Helicase C-terminal domain; the sequence is SLYQALYEHS…EFSQLYRVLK (177 aa). Residues 456 to 523 are binding to the cap-specific mRNA (nucleoside-2'-O-)-methyltransferase; that stretch reads DIFILDMTWN…EIIQNKAREF (68 aa).

The protein belongs to the helicase family. NPH I subfamily. Monomer. Interacts (via C-terminus) with RAP94 (via N-terminus). Interacts with the cap-specific mRNA (nucleoside-2'-O-)-methyltransferase.

The protein localises to the virion. It catalyses the reaction a ribonucleoside 5'-triphosphate + H2O = a ribonucleoside 5'-diphosphate + phosphate + H(+). Functionally, DNA-dependent ATPase required for providing the needed energy to achieve the termination of early transcripts. Acts in concert with the RAP94 subunit of the virion RNA polymerase and the capping enzyme/VTF to catalyze release of UUUUUNU-containing nascent RNA from the elongation complex. NPH-I must bind ssDNA in order to exhibit ATPase activity. The chain is Nucleoside triphosphatase I (NPH1) from Homo sapiens (Human).